Here is a 179-residue protein sequence, read N- to C-terminus: Translation initiation factor IF-3 (179 aa).

It belongs to the IF-3 family. In terms of assembly, monomer.

It is found in the cytoplasm. Its function is as follows. IF-3 binds to the 30S ribosomal subunit and shifts the equilibrium between 70S ribosomes and their 50S and 30S subunits in favor of the free subunits, thus enhancing the availability of 30S subunits on which protein synthesis initiation begins. In Proteus hauseri, this protein is Translation initiation factor IF-3.